The primary structure comprises 167 residues: uncharacterized protein (167 aa).

An N-acetyltransferase domain is found at 9–167 (PVMRRLTLQD…DCEVRMLREL (159 aa)).

Belongs to the acetyltransferase family.

This is an uncharacterized protein from Escherichia coli (strain K12).